We begin with the raw amino-acid sequence, 385 residues long: S-adenosylmethionine synthase (385 aa).

Histidine 15 lines the ATP pocket. Aspartate 17 is a Mg(2+) binding site. Glutamate 43 serves as a coordination point for K(+). Positions 56 and 99 each coordinate L-methionine. Positions 99–109 (QSPDINQGVDR) are flexible loop. ATP-binding positions include 164–166 (DAK), 230–231 (RF), aspartate 239, 245–246 (RK), alanine 262, and lysine 266. Aspartate 239 is a binding site for L-methionine. Lysine 270 contributes to the L-methionine binding site.

The protein belongs to the AdoMet synthase family. Homotetramer; dimer of dimers. Requires Mg(2+) as cofactor. K(+) serves as cofactor.

It localises to the cytoplasm. It carries out the reaction L-methionine + ATP + H2O = S-adenosyl-L-methionine + phosphate + diphosphate. It functions in the pathway amino-acid biosynthesis; S-adenosyl-L-methionine biosynthesis; S-adenosyl-L-methionine from L-methionine: step 1/1. Its function is as follows. Catalyzes the formation of S-adenosylmethionine (AdoMet) from methionine and ATP. The overall synthetic reaction is composed of two sequential steps, AdoMet formation and the subsequent tripolyphosphate hydrolysis which occurs prior to release of AdoMet from the enzyme. This is S-adenosylmethionine synthase from Sodalis glossinidius (strain morsitans).